Consider the following 474-residue polypeptide: Cyclin-dependent kinase 18 (474 aa).

Residues Ser14, Ser74, Ser89, Ser98, Ser117, and Ser132 each carry the phosphoserine modification. The disordered stretch occupies residues 44–87 (DLQLGPLGRDPLQECSTFSPTDSGEEPGQLSPGVQFQRRQNQRR). Residues 144-425 (YVKLDKLGEG…AEAALSHPYF (282 aa)) form the Protein kinase domain. ATP-binding positions include 150–158 (LGEGTYATV) and Lys173. Residue Asp265 is the Proton acceptor of the active site. Residues Ser440 and Ser443 each carry the phosphoserine modification.

Belongs to the protein kinase superfamily. CMGC Ser/Thr protein kinase family. CDC2/CDKX subfamily.

The catalysed reaction is L-seryl-[protein] + ATP = O-phospho-L-seryl-[protein] + ADP + H(+). It catalyses the reaction L-threonyl-[protein] + ATP = O-phospho-L-threonyl-[protein] + ADP + H(+). Functionally, may play a role in signal transduction cascades in terminally differentiated cells. This Pongo abelii (Sumatran orangutan) protein is Cyclin-dependent kinase 18 (CDK18).